The sequence spans 244 residues: Phosphoadenosine 5'-phosphosulfate reductase (244 aa).

The Nucleophile; cysteine thiosulfonate intermediate role is filled by cysteine 239.

The protein belongs to the PAPS reductase family. CysH subfamily.

The protein localises to the cytoplasm. The enzyme catalyses [thioredoxin]-disulfide + sulfite + adenosine 3',5'-bisphosphate + 2 H(+) = [thioredoxin]-dithiol + 3'-phosphoadenylyl sulfate. It functions in the pathway sulfur metabolism; hydrogen sulfide biosynthesis; sulfite from sulfate: step 3/3. Its function is as follows. Catalyzes the formation of sulfite from phosphoadenosine 5'-phosphosulfate (PAPS) using thioredoxin as an electron donor. The polypeptide is Phosphoadenosine 5'-phosphosulfate reductase (Salmonella newport (strain SL254)).